Here is a 77-residue protein sequence, read N- to C-terminus: ATP synthase subunit c (77 aa).

A run of 2 helical transmembrane segments spans residues 13–33 (IATV…GIVA) and 55–75 (FLGI…YFIF).

It belongs to the ATPase C chain family. F-type ATPases have 2 components, F(1) - the catalytic core - and F(0) - the membrane proton channel. F(1) has five subunits: alpha(3), beta(3), gamma(1), delta(1), epsilon(1). F(0) has three main subunits: a(1), b(2) and c(10-14). The alpha and beta chains form an alternating ring which encloses part of the gamma chain. F(1) is attached to F(0) by a central stalk formed by the gamma and epsilon chains, while a peripheral stalk is formed by the delta and b chains.

It localises to the cell membrane. Its function is as follows. F(1)F(0) ATP synthase produces ATP from ADP in the presence of a proton or sodium gradient. F-type ATPases consist of two structural domains, F(1) containing the extramembraneous catalytic core and F(0) containing the membrane proton channel, linked together by a central stalk and a peripheral stalk. During catalysis, ATP synthesis in the catalytic domain of F(1) is coupled via a rotary mechanism of the central stalk subunits to proton translocation. Key component of the F(0) channel; it plays a direct role in translocation across the membrane. A homomeric c-ring of between 10-14 subunits forms the central stalk rotor element with the F(1) delta and epsilon subunits. This chain is ATP synthase subunit c, found in Clavibacter sepedonicus (Clavibacter michiganensis subsp. sepedonicus).